Reading from the N-terminus, the 432-residue chain is MISRPISQQIYSNLNRVIPGGVNSPVRACANMGQIPMIIDHAYRDTLVDVDGKTYVDYCGSWGALIHGHAHPSILEAVQQRMKKGTSFGITTSIEGELAQEVIKLIDSVEKIRFVSSGTEATMSAVRLARGYTNKEFIVKFNGNYHGHADFFLVQAGSGVLEVSPSASSAGIPADIVKQTLCLPYNDIEACRQIFHHSDYRHKIAAIILEPIAGNMGVIPASQEFMQFLRKETLAMGALLIFDEVMTGFRVALKGAQDIYPVEPDLTCFGKIIGGGFPAAAFGGREEIMNLLAPLGSVYQAGTLSGNPIAMEAGLQSLRLIQQPGFYEELHRKTDLLLNPIKETIKKNNWPICIQQAGSMFTLFFCKNRVRNLEDALKANTTIFANFFRKLFDQGIYIPPSQHEAWFISQAHEESNLIKTQSAILTFLEENF.

Position 271 is an N6-(pyridoxal phosphate)lysine (Lys-271).

It belongs to the class-III pyridoxal-phosphate-dependent aminotransferase family. HemL subfamily. Homodimer. It depends on pyridoxal 5'-phosphate as a cofactor.

The protein localises to the cytoplasm. It carries out the reaction (S)-4-amino-5-oxopentanoate = 5-aminolevulinate. It participates in porphyrin-containing compound metabolism; protoporphyrin-IX biosynthesis; 5-aminolevulinate from L-glutamyl-tRNA(Glu): step 2/2. In Protochlamydia amoebophila (strain UWE25), this protein is Glutamate-1-semialdehyde 2,1-aminomutase.